The chain runs to 148 residues: Phosphoribosyl-AMP cyclohydrolase (148 aa).

Position 91 (Asp91) interacts with Mg(2+). Cys92 is a binding site for Zn(2+). Mg(2+)-binding residues include Asp93 and Asp95. Positions 109 and 116 each coordinate Zn(2+).

The protein belongs to the PRA-CH family. In terms of assembly, homodimer. Requires Mg(2+) as cofactor. Zn(2+) is required as a cofactor.

The protein resides in the cytoplasm. It carries out the reaction 1-(5-phospho-beta-D-ribosyl)-5'-AMP + H2O = 1-(5-phospho-beta-D-ribosyl)-5-[(5-phospho-beta-D-ribosylamino)methylideneamino]imidazole-4-carboxamide. It functions in the pathway amino-acid biosynthesis; L-histidine biosynthesis; L-histidine from 5-phospho-alpha-D-ribose 1-diphosphate: step 3/9. Functionally, catalyzes the hydrolysis of the adenine ring of phosphoribosyl-AMP. This chain is Phosphoribosyl-AMP cyclohydrolase, found in Rhodopseudomonas palustris (strain HaA2).